We begin with the raw amino-acid sequence, 358 residues long: E3 ubiquitin-protein ligase SIS3 (358 aa).

Positions 1 to 27 are cleaved as a signal peptide; sequence MAMRGVDFKWYDGFFLSMLATSVIIVA. 3 consecutive transmembrane segments (helical) span residues 40 to 60, 85 to 105, and 125 to 145; these read LHIWIVVDYTTVFIFRVFMFV, VVVLSVLSLLLYPFLWAWTVI, and GFLIWLMFSYCGLLCIAFICV. The segment at 235–276 adopts an RING-type; atypical zinc-finger fold; it reads CLICLEEFHIGHEVRGLPCAHNFHVECIDQWLRLNVKCPRCR. The tract at residues 336 to 358 is disordered; sequence TALETAENGGVPPVLTDLSPSRR.

Expressed in roots, stems, leaves, flowers and siliques.

The protein resides in the membrane. The enzyme catalyses S-ubiquitinyl-[E2 ubiquitin-conjugating enzyme]-L-cysteine + [acceptor protein]-L-lysine = [E2 ubiquitin-conjugating enzyme]-L-cysteine + N(6)-ubiquitinyl-[acceptor protein]-L-lysine.. Its pathway is protein modification; protein ubiquitination. E3 ubiquitin protein ligase that acts as a positive regulator of sugar signaling during early seedling development. Possesses E3 ligase activity in vitro. The sequence is that of E3 ubiquitin-protein ligase SIS3 (SIS3) from Arabidopsis thaliana (Mouse-ear cress).